Reading from the N-terminus, the 330-residue chain is D-lactate dehydrogenase (330 aa).

Residues 155 to 156, D175, 206 to 207, N212, 233 to 235, and D259 contribute to the NAD(+) site; these read RI, MP, and MAR. R235 is a catalytic residue. Residue E264 is part of the active site. The active-site Proton donor is H296.

This sequence belongs to the D-isomer specific 2-hydroxyacid dehydrogenase family.

The catalysed reaction is (R)-lactate + NAD(+) = pyruvate + NADH + H(+). This Streptococcus pyogenes serotype M1 protein is D-lactate dehydrogenase (ldhD).